Consider the following 300-residue polypeptide: 3-methyl-2-oxobutanoate hydroxymethyltransferase (300 aa).

D75 and D118 together coordinate Mg(2+). 3-methyl-2-oxobutanoate is bound by residues 75-76 (DS), D118, and K147. E149 lines the Mg(2+) pocket. The active-site Proton acceptor is E216.

It belongs to the PanB family. In terms of assembly, homodecamer; pentamer of dimers. Mg(2+) is required as a cofactor.

It localises to the cytoplasm. It carries out the reaction 3-methyl-2-oxobutanoate + (6R)-5,10-methylene-5,6,7,8-tetrahydrofolate + H2O = 2-dehydropantoate + (6S)-5,6,7,8-tetrahydrofolate. The protein operates within cofactor biosynthesis; (R)-pantothenate biosynthesis; (R)-pantoate from 3-methyl-2-oxobutanoate: step 1/2. Functionally, catalyzes the reversible reaction in which hydroxymethyl group from 5,10-methylenetetrahydrofolate is transferred onto alpha-ketoisovalerate to form ketopantoate. This Verminephrobacter eiseniae (strain EF01-2) protein is 3-methyl-2-oxobutanoate hydroxymethyltransferase.